A 396-amino-acid chain; its full sequence is Probable sugar efflux transporter (396 aa).

12 helical membrane passes run 15–35 (VVTLAVAAFIFNTTEFVPVGL), 50–70 (VGIMLTIYAWVVALMSLPFML), 81–101 (LICLFVVFIASHVLSFLSWSF), 103–123 (VLVISRIGVAFAHAIFWSITA), 136–156 (AQALSLIATGTALAMVLGLPL), 170–190 (FFAIGIGALITLLCLIKLLPL), 209–229 (PALMSIYLLTVVVVTAHYTAY), 246–266 (FATALLLLLGGAGIIGSVIFG), 275–295 (ALVSTAIALLLVCLALLLPAA), 299–319 (IHLGVLSIFWGIAMMIIGLGM), 333–353 (VAMALFSGIFNIGIGAGALVG), and 364–384 (MIGYVGAVPAFAALIWSIIIF).

This sequence belongs to the major facilitator superfamily. SotB (TC 2.A.1.2) family.

The protein localises to the cell inner membrane. Functionally, involved in the efflux of sugars. The physiological role may be the reduction of the intracellular concentration of toxic sugars or sugar metabolites. The sequence is that of Probable sugar efflux transporter from Escherichia coli O127:H6 (strain E2348/69 / EPEC).